A 129-amino-acid chain; its full sequence is Glycine cleavage system H protein (129 aa).

Positions 24–106 (TYTVGITEHA…YAGGWIFKIK (83 aa)) constitute a Lipoyl-binding domain. N6-lipoyllysine is present on Lys-65.

This sequence belongs to the GcvH family. As to quaternary structure, the glycine cleavage system is composed of four proteins: P, T, L and H. It depends on (R)-lipoate as a cofactor.

Functionally, the glycine cleavage system catalyzes the degradation of glycine. The H protein shuttles the methylamine group of glycine from the P protein to the T protein. The polypeptide is Glycine cleavage system H protein (Escherichia coli O127:H6 (strain E2348/69 / EPEC)).